Here is an 887-residue protein sequence, read N- to C-terminus: MSLFKARDWWSTILGDKEEFDQGCLCLANVDNSGNGQDKIIVGSFMGYLRIFSPHPAKTGDGAQAEDLLLEVDLRDPVLQVEVGKFVSGTEMLHLAVLHSRKLCVYSVSGTLGNVEHGNQCQMKLMYEHNLQRTACNMTYGSFGGVKGRDLICIQSMDGMLMVFEQESYAFGRFLPGFLLPGPLAYSSRTDSFLTVSSCQQVESYKYQVLAFATDADKRQETEQQKLGSGKRLVVDWTLNIGEQALDICIVSFNQSASSVFVLGERNFFCLKDNGQIRFMKKLDWSPSCFLPYCSVSEGTINTLIGNHNNMLHIYQDVTLKWATQLPHIPVAVRVGCLHDLKGVIVTLSDDGHLQCSYLGTDPSLFQAPNVQSRELNYDELDVEMKELQKIIKDVNKSQGVWPMTEREDDLNVSVVVSPNFDSVSQATDVEVGTDLVPSVTVKVTLQNRVILQKAKLSVYVQPPLELTCDQFTFEFMTPDLTRTVSFSVYLKRSYTPSELEGNAVVSYSRPTDRNPDGIPRVIQCKFRLPLKLICLPGQPSKTASHKITIDTNKSPVSLLSLFPGFASQSDDDQVNVMGFHFLGGARITVLASKTSQRYRIQSEQFEDLWLITNELILRLQEYFEKQGVKDFACSFSGSIPLQEYFELIDHHFELRINGEKLEELLSERAVQFRAIQRRLLARFKDKTPAPLQHLDTLLDGTYKQVIALADAVEENQGNLFQSFTRLKSATHLVILLIALWQKLSADQVAILEAAFLPLQEDTQELGWEETVDAAISHLLKTCLSKSSKEQALNLNSQLNIPKDTSQLKKHITLLCDRLSKGGRLCLSTDAAAPQTMVMPGGCTTIPESDLEERSVEQDSTELFTNHRHLTAETPRPEVSPLQGVSE.

A seven-bladed beta-propeller region spans residues 1–407; that stretch reads MSLFKARDWW…SQGVWPMTER (407 aa). Positions 685–765 are interaction with LZTL1; the sequence is KDKTPAPLQH…FLPLQEDTQE (81 aa). Residues 850-887 form a disordered region; the sequence is DLEERSVEQDSTELFTNHRHLTAETPRPEVSPLQGVSE.

Part of BBSome complex, that contains BBS1, BBS2, BBS4, BBS5, BBS7, BBS8/TTC8, BBS9 and BBIP10. Interacts with LZTL1; the interaction mediates the association of LZTL1 with the BBsome complex and regulates BBSome ciliary trafficking. As to expression, widely expressed. Expressed in adult heart, skeletal muscle, lung, liver, kidney, placenta and brain, and in fetal kidney, lung, liver and brain.

The protein resides in the cytoplasm. It is found in the cytoskeleton. It localises to the microtubule organizing center. Its subcellular location is the centrosome. The protein localises to the cell projection. The protein resides in the cilium membrane. It is found in the centriolar satellite. The BBSome complex is thought to function as a coat complex required for sorting of specific membrane proteins to the primary cilia. The BBSome complex is required for ciliogenesis but is dispensable for centriolar satellite function. This ciliogenic function is mediated in part by the Rab8 GDP/GTP exchange factor, which localizes to the basal body and contacts the BBSome. Rab8(GTP) enters the primary cilium and promotes extension of the ciliary membrane. Firstly the BBSome associates with the ciliary membrane and binds to RAB3IP/Rabin8, the guanosyl exchange factor (GEF) for Rab8 and then the Rab8-GTP localizes to the cilium and promotes docking and fusion of carrier vesicles to the base of the ciliary membrane. Required for proper BBSome complex assembly and its ciliary localization. This Homo sapiens (Human) protein is Protein PTHB1 (BBS9).